A 501-amino-acid chain; its full sequence is 1-aminocyclopropane-1-carboxylate synthase-like protein 1 (501 aa).

A substrate-binding site is contributed by Glu-105. Lys-323 bears the N6-(pyridoxal phosphate)lysine mark. The tract at residues Gly-480–Arg-501 is disordered. The segment covering Pro-490 to Arg-501 has biased composition (polar residues).

The protein belongs to the class-I pyridoxal-phosphate-dependent aminotransferase family.

In terms of biological role, does not catalyze the synthesis of 1-aminocyclopropane-1-carboxylate but is capable of catalyzing the deamination of L-vinylglycine. The polypeptide is 1-aminocyclopropane-1-carboxylate synthase-like protein 1 (ACCS) (Homo sapiens (Human)).